The primary structure comprises 1020 residues: Glycine dehydrogenase (decarboxylating), mitochondrial (1020 aa).

A mitochondrion-targeting transit peptide spans M1–R35. The interval R21–A46 is disordered. N6-acetyllysine occurs at positions 447, 514, 648, and 664. Position 754 is an N6-(pyridoxal phosphate)lysine (K754).

Belongs to the GcvP family. As to quaternary structure, homodimer. Interacts with GCSH. The glycine cleavage system is composed of four proteins: P (GLDC), T (GCST), L (DLD) and H (GCSH). Pyridoxal 5'-phosphate serves as cofactor.

The protein resides in the mitochondrion. It catalyses the reaction N(6)-[(R)-lipoyl]-L-lysyl-[glycine-cleavage complex H protein] + glycine + H(+) = N(6)-[(R)-S(8)-aminomethyldihydrolipoyl]-L-lysyl-[glycine-cleavage complex H protein] + CO2. Stimulated by lipoic acid. Inhibited in presence of methylamine. Functionally, the glycine cleavage system catalyzes the degradation of glycine. The P protein (GLDC) binds the alpha-amino group of glycine through its pyridoxal phosphate cofactor; CO(2) is released and the remaining methylamine moiety is then transferred to the lipoamide cofactor of the H protein (GCSH). The protein is Glycine dehydrogenase (decarboxylating), mitochondrial of Homo sapiens (Human).